The sequence spans 354 residues: Ornithine transcarbamylase, mitochondrial (354 aa).

A mitochondrion-targeting transit peptide spans 1-32 (MLSNLRILLNKAALRKAHTSMVRNFRYGKPVQ). Lys-70 is modified (N6-acetyllysine; alternate). The residue at position 70 (Lys-70) is an N6-succinyllysine; alternate. Lys-80 is subject to N6-succinyllysine. Lys-88 carries the N6-acetyllysine; alternate modification. Residue Lys-88 is modified to N6-succinyllysine; alternate. Residue 90-93 (STRT) coordinates carbamoyl phosphate. Ser-133 bears the Phosphoserine mark. Arg-141 lines the carbamoyl phosphate pocket. Lys-144 bears the N6-acetyllysine; alternate mark. Lys-144 bears the N6-succinyllysine; alternate mark. Positions 168 and 171 each coordinate carbamoyl phosphate. Asn-199 serves as a coordination point for L-ornithine. Lys-221, Lys-231, and Lys-238 each carry N6-acetyllysine; alternate. N6-succinyllysine; alternate is present on residues Lys-221, Lys-231, and Lys-238. Residues Asp-263, Ser-267, and Met-268 each contribute to the L-ornithine site. Lys-274 and Lys-289 each carry N6-succinyllysine. An N6-acetyllysine; alternate modification is found at Lys-292. Lys-292 is modified (N6-succinyllysine; alternate). Residue Cys-303 is the Proton acceptor of the active site. 303–304 (CL) contacts carbamoyl phosphate. Lys-307 is modified (N6-acetyllysine; alternate). Lys-307 carries the N6-succinyllysine; alternate modification. Residue Arg-330 coordinates carbamoyl phosphate.

The protein belongs to the aspartate/ornithine carbamoyltransferase superfamily. OTCase family. As to quaternary structure, homotrimer. In terms of processing, acetylation at Lys-88 negatively regulates ornithine carbamoyltransferase activity in response to nutrient signals.

The protein localises to the mitochondrion matrix. It carries out the reaction carbamoyl phosphate + L-ornithine = L-citrulline + phosphate + H(+). Its pathway is nitrogen metabolism; urea cycle; L-citrulline from L-ornithine and carbamoyl phosphate: step 1/1. Its activity is regulated as follows. Negatively regulated by lysine acetylation. Functionally, catalyzes the second step of the urea cycle, the condensation of carbamoyl phosphate with L-ornithine to form L-citrulline. The urea cycle ensures the detoxification of ammonia by converting it to urea for excretion. This is Ornithine transcarbamylase, mitochondrial from Rattus norvegicus (Rat).